The primary structure comprises 444 residues: Deoxyguanosinetriphosphate triphosphohydrolase-like protein (444 aa).

The region spanning 66-259 is the HD domain; it reads RLTHSLEAAQ…MELADDIAYG (194 aa).

The protein belongs to the dGTPase family. Type 2 subfamily.

This Vibrio campbellii (strain ATCC BAA-1116) protein is Deoxyguanosinetriphosphate triphosphohydrolase-like protein.